We begin with the raw amino-acid sequence, 193 residues long: MEIEKDEDDTTLVDSGGDFDCNICLDQVRDPVVTLCGHLFCWPCIHKWTYASNNSRQRVDQYDHKREPPKCPVCKSDVSEATLVPIYGRGQKAPQSGSNVPSRPTGPVYDLRGVGQRLGEGESQRYMYRMPDPVMGVVCEMVYRRLFGESSSNMAPYRDMNVRSRRRAMQAEESLSRVYLFLLCFMFMCLFLF.

The RING-type zinc finger occupies 21–75 (CNICLDQVRDPVVTLCGHLFCWPCIHKWTYASNNSRQRVDQYDHKREPPKCPVCK). A helical; Anchor for type IV membrane protein membrane pass occupies residues 175–192 (LSRVYLFLLCFMFMCLFL).

As to quaternary structure, interacts with ERABP1. In terms of tissue distribution, barely detected in roots and limited to the root tips. Expressed in leaf hydathodes and in siliques.

It is found in the endoplasmic reticulum membrane. The catalysed reaction is S-ubiquitinyl-[E2 ubiquitin-conjugating enzyme]-L-cysteine + [acceptor protein]-L-lysine = [E2 ubiquitin-conjugating enzyme]-L-cysteine + N(6)-ubiquitinyl-[acceptor protein]-L-lysine.. It participates in protein modification; protein ubiquitination. E3 ubiquitin-protein ligase that promotes the ubiquitination and proteasomal degradation of the auxin-binding protein ERABP1. The protein is E3 ubiquitin-protein ligase RMA2 (RMA2) of Arabidopsis thaliana (Mouse-ear cress).